The following is a 342-amino-acid chain: Organic solute transporter alpha-like protein 2 (342 aa).

Over 1–50 (MLEISPWETLVKLLTDSLLNCTGTHEDVPHAKTFLRSLTTTYIASLAVAT) the chain is Extracellular. An N-linked (GlcNAc...) asparagine glycan is attached at asparagine 20. The chain crosses the membrane as a helical span at residues 51–71 (AVTVGTVCLAVLHLIYIHFYI). Topologically, residues 72 to 79 (THSSRRLH) are cytoplasmic. The chain crosses the membrane as a helical span at residues 80 to 100 (IVLLACTAPLVSLLALVAMYM). At 101 to 109 (PRVWFLSHL) the chain is on the extracellular side. A helical transmembrane segment spans residues 110-130 (LSFLYFSFALWVIICLLLHIF). The Cytoplasmic segment spans residues 131 to 176 (DGHHALVTKMMQRLQYVEIATPPFCCLFPCLPKVRLEGKKIRWCEL). Residues 177 to 197 (MVMQAPIVRLFATLVSLVIYF) traverse the membrane as a helical segment. Residues 198–208 (EYQDQGLVPLK) are Extracellular-facing. A helical transmembrane segment spans residues 209 to 229 (VLDFITLPSLLAGIYGTHILV). Over 230–243 (TTVSRMDELISYRY) the chain is Cytoplasmic. Residues 244-264 (VVVFRLLDFFFMVFGLQQPVF) form a helical membrane-spanning segment. Residues 265–290 (DFLARYGAFGCGTVLPAIETSFYWKN) lie on the Extracellular side of the membrane. Residues 291 to 311 (FFTVIEAFCVTLISTVLLQPS) form a helical membrane-spanning segment. Topologically, residues 312–342 (KSSFFDKHPSCRSMSSARSTITDVDTDESTT) are cytoplasmic.

The protein belongs to the OST-alpha family.

The protein localises to the cell membrane. Its function is as follows. Probable transporter. The chain is Organic solute transporter alpha-like protein 2 (osta-2) from Caenorhabditis elegans.